Reading from the N-terminus, the 139-residue chain is D-ribose pyranase (139 aa).

The Proton donor role is filled by His-20. Substrate is bound by residues Asp-28, His-106, and 128–130; that span reads YAN.

It belongs to the RbsD / FucU family. RbsD subfamily. In terms of assembly, homodecamer.

Its subcellular location is the cytoplasm. The enzyme catalyses beta-D-ribopyranose = beta-D-ribofuranose. The protein operates within carbohydrate metabolism; D-ribose degradation; D-ribose 5-phosphate from beta-D-ribopyranose: step 1/2. Functionally, catalyzes the interconversion of beta-pyran and beta-furan forms of D-ribose. This Actinobacillus succinogenes (strain ATCC 55618 / DSM 22257 / CCUG 43843 / 130Z) protein is D-ribose pyranase.